Consider the following 78-residue polypeptide: Small ribosomal subunit protein uS17 (78 aa).

It belongs to the universal ribosomal protein uS17 family. Part of the 30S ribosomal subunit.

In terms of biological role, one of the primary rRNA binding proteins, it binds specifically to the 5'-end of 16S ribosomal RNA. The sequence is that of Small ribosomal subunit protein uS17 from Allorhizobium ampelinum (strain ATCC BAA-846 / DSM 112012 / S4) (Agrobacterium vitis (strain S4)).